We begin with the raw amino-acid sequence, 325 residues long: GMP reductase (325 aa).

Cys174 serves as the catalytic Thioimidate intermediate. An NADP(+)-binding site is contributed by 203–226; the sequence is IVADGGIRNNGDIAKSIRFGASMC.

Belongs to the IMPDH/GMPR family. GuaC type 2 subfamily.

The enzyme catalyses IMP + NH4(+) + NADP(+) = GMP + NADPH + 2 H(+). Catalyzes the irreversible NADPH-dependent deamination of GMP to IMP. It functions in the conversion of nucleobase, nucleoside and nucleotide derivatives of G to A nucleotides, and in maintaining the intracellular balance of A and G nucleotides. The polypeptide is GMP reductase (Ligilactobacillus salivarius (strain UCC118) (Lactobacillus salivarius)).